Here is a 335-residue protein sequence, read N- to C-terminus: tRNA N6-adenosine threonylcarbamoyltransferase (335 aa).

H110 and H114 together coordinate Fe cation. Residues 132–136 (LVSGG), D165, G178, and N271 contribute to the substrate site. D299 provides a ligand contact to Fe cation.

The protein belongs to the KAE1 / TsaD family. The cofactor is Fe(2+).

The protein resides in the cytoplasm. It carries out the reaction L-threonylcarbamoyladenylate + adenosine(37) in tRNA = N(6)-L-threonylcarbamoyladenosine(37) in tRNA + AMP + H(+). Its function is as follows. Required for the formation of a threonylcarbamoyl group on adenosine at position 37 (t(6)A37) in tRNAs that read codons beginning with adenine. Is involved in the transfer of the threonylcarbamoyl moiety of threonylcarbamoyl-AMP (TC-AMP) to the N6 group of A37, together with TsaE and TsaB. TsaD likely plays a direct catalytic role in this reaction. This is tRNA N6-adenosine threonylcarbamoyltransferase from Campylobacter jejuni subsp. jejuni serotype O:2 (strain ATCC 700819 / NCTC 11168).